An 865-amino-acid chain; its full sequence is V-type proton ATPase 116 kDa subunit a 3 (865 aa).

The Cytoplasmic segment spans residues 1 to 409 (MGSIYRSEHM…VNPAPWTIIS (409 aa)). Residues 51-121 (FVNEVRRCDE…NKNCKVLKNN (71 aa)) are a coiled coil. The chain crosses the membrane as a helical span at residues 410-430 (FPFLFAVMFGDAGHGIIMLIA). Over 431–453 (ASAFVIFEKKLISMKIKDEIFNT) the chain is Extracellular. A helical transmembrane segment spans residues 454 to 474 (FFGGRYVVLLMGMFAIYTGFI). The Cytoplasmic segment spans residues 475 to 556 (YNDFYSKSVN…FLNPMKMKTS (82 aa)). A helical membrane pass occupies residues 557 to 577 (ILLGISQMAFGIMLSLMNHIG). Residue asparagine 578 is glycosylated (N-linked (GlcNAc...) asparagine). The Extracellular segment spans residues 578–583 (NRSVVD). Residues 584–604 (IVFVFIPQCLFLGCIFVYLCL) traverse the membrane as a helical segment. Over 605 to 623 (QVLMKWIFFYVKPAYIFGR) the chain is Cytoplasmic. Residues 624 to 644 (LYPGSNCAPSLLIGLINMFMV) form a helical membrane-spanning segment. Residues 645–688 (KSRDASFAHDVGTAAGKEWVIVNGQNVTYTINDQCYLQQWYPNQ) lie on the Extracellular side of the membrane. Asparagine 670 and asparagine 687 each carry an N-linked (GlcNAc...) asparagine glycan. A helical transmembrane segment spans residues 689-709 (SLVELILLLIAVVSVPVMLLV). Residues 710–798 (KPFYIRWRHS…LTMGGWGGSA (89 aa)) are Cytoplasmic-facing. Residues 799 to 819 (AITILFYFIFSILSVCILILM) form a helical membrane-spanning segment. Residues 820–865 (EGLSAFLHAIRLHWVEFQSKFYGGTGIQFEPFCFTKIIRVYEGLDQ) lie on the Extracellular side of the membrane.

This sequence belongs to the V-ATPase 116 kDa subunit family. V-ATPase is a heteromultimeric enzyme made up of two complexes: the ATP-hydrolytic V1 complex and the proton translocation V0 complex. The V1 complex consists of three catalytic AB heterodimers that form a heterohexamer, three peripheral stalks each consisting of EG heterodimers, one central rotor including subunits D and F, and the regulatory subunits C and H. The proton translocation complex V0 consists of the proton transport subunit a, a ring of proteolipid subunits c9c'', rotary subunit d, subunits e and f, and the accessory subunits vah-19/Ac45 and vah-20/PRR. Interacts with V-type proton ATPase subunit C vha-11.

The protein resides in the apical cell membrane. Functionally, subunit of the V0 complex of vacuolar(H+)-ATPase (V-ATPase), a multisubunit enzyme composed of a peripheral complex (V1) that hydrolyzes ATP and a membrane integral complex (V0) that translocates protons. V-ATPase is responsible for acidifying and maintaining the pH of intracellular compartments and in some cell types, is targeted to the plasma membrane, where it is responsible for acidifying the extracellular environment. In the intestine, required for the rhythmic defecation behavior by promoting acidification in the gut lumen following defecation. Also, luminal acidification is required for nutrient uptake. In Caenorhabditis elegans, this protein is V-type proton ATPase 116 kDa subunit a 3.